Reading from the N-terminus, the 402-residue chain is Endoplasmic reticulum junction formation protein lunapark-B (402 aa).

At 1-45 the chain is on the cytoplasmic side; that stretch reads MGAIISRWKTKPSTVELLESLDKDIKDLEEFRAKNQRLLKLWVGR. A helical transmembrane segment spans residues 46 to 66; the sequence is LLFYSSALYLLTCLCVYYLYF. Residues 67–77 lie on the Lumenal side of the membrane; it reads PQQWGARLITA. Residues 78–98 traverse the membrane as a helical segment; it reads LPLLAFPALVLLLRKMLIFLF. At 99–402 the chain is on the cytoplasmic side; the sequence is SKRTERNNDK…EEQKKEDESN (304 aa). The stretch at 100–128 forms a coiled coil; sequence KRTERNNDKLEDLKTQKRKILEEVMETET. Residues 142–240 are disordered; it reads ESKKKAEAEA…PGPGSGMRPP (99 aa). Polar residues predominate over residues 205–222; that stretch reads SASTPAGASQAETPQQMM. Residues 276–301 form a C4-type; plays a role in ER morphology zinc finger; it reads CQQCFSHNGMALKEEFEFVAFRCAYC. Residues 311–402 are disordered; that stretch reads RPQAPRLPEF…EEQKKEDESN (92 aa). Basic and acidic residues predominate over residues 321–330; that stretch reads SFERRLRSES. Positions 341 to 352 are enriched in acidic residues; it reads TPEDSDAPEDDM. A compositionally biased stretch (basic and acidic residues) spans 385-402; it reads PHAEAEALEEQKKEDESN.

Belongs to the lunapark family. As to quaternary structure, homodimer; homodimerization requires the C4-type zinc finger motif and decreases during mitosis in a phosphorylation-dependent manner. Post-translationally, phosphorylated. Phosphorylation occurs during interphase. Phosphorylation also occurs during mitosis; these phosphorylations reduce both its homodimerization and the ER three-way tubular junction formation.

The protein localises to the endoplasmic reticulum membrane. Endoplasmic reticulum (ER)-shaping membrane protein that plays a role in determining ER morphology. Involved in the stabilization of nascent three-way ER tubular junctions within the ER network. May also play a role as a curvature-stabilizing protein within three-way ER tubular junction network. The chain is Endoplasmic reticulum junction formation protein lunapark-B (lnpkb) from Danio rerio (Zebrafish).